The chain runs to 244 residues: 5-oxoprolinase subunit A (244 aa).

This sequence belongs to the LamB/PxpA family. In terms of assembly, forms a complex composed of PxpA, PxpB and PxpC.

The catalysed reaction is 5-oxo-L-proline + ATP + 2 H2O = L-glutamate + ADP + phosphate + H(+). Catalyzes the cleavage of 5-oxoproline to form L-glutamate coupled to the hydrolysis of ATP to ADP and inorganic phosphate. The protein is 5-oxoprolinase subunit A of Shigella flexneri.